Reading from the N-terminus, the 37-residue chain is Antifungal protein 4 (37 aa).

It is found in the secreted. Functionally, possesses antifungal activity against P.infestans but not F.graminearum. The protein is Antifungal protein 4 of Malva parviflora (Little mallow).